The following is a 101-amino-acid chain: Small ribosomal subunit protein bS18c (101 aa).

Over residues 1 to 19 (MDKSKQLFRKSKGSFRRRL) the composition is skewed to basic residues. The disordered stretch occupies residues 1 to 23 (MDKSKQLFRKSKGSFRRRLPPIG).

The protein belongs to the bacterial ribosomal protein bS18 family. Part of the 30S ribosomal subunit.

It is found in the plastid. The protein localises to the chloroplast. This chain is Small ribosomal subunit protein bS18c, found in Acorus gramineus (Dwarf sweet flag).